The primary structure comprises 662 residues: tRNA 5-methylaminomethyl-2-thiouridine biosynthesis bifunctional protein MnmC (662 aa).

Positions 1 to 245 (MKQNAIQPAN…KREMLTGEMA (245 aa)) are tRNA (mnm(5)s(2)U34)-methyltransferase. An FAD-dependent cmnm(5)s(2)U34 oxidoreductase region spans residues 270-662 (IGGGIASALL…RKLLKGKAVK (393 aa)).

In the N-terminal section; belongs to the methyltransferase superfamily. tRNA (mnm(5)s(2)U34)-methyltransferase family. The protein in the C-terminal section; belongs to the DAO family. Requires FAD as cofactor.

It localises to the cytoplasm. It carries out the reaction 5-aminomethyl-2-thiouridine(34) in tRNA + S-adenosyl-L-methionine = 5-methylaminomethyl-2-thiouridine(34) in tRNA + S-adenosyl-L-homocysteine + H(+). In terms of biological role, catalyzes the last two steps in the biosynthesis of 5-methylaminomethyl-2-thiouridine (mnm(5)s(2)U) at the wobble position (U34) in tRNA. Catalyzes the FAD-dependent demodification of cmnm(5)s(2)U34 to nm(5)s(2)U34, followed by the transfer of a methyl group from S-adenosyl-L-methionine to nm(5)s(2)U34, to form mnm(5)s(2)U34. In Klebsiella pneumoniae subsp. pneumoniae (strain ATCC 700721 / MGH 78578), this protein is tRNA 5-methylaminomethyl-2-thiouridine biosynthesis bifunctional protein MnmC.